The sequence spans 44 residues: Large ribosomal subunit protein bL34 (44 aa).

This sequence belongs to the bacterial ribosomal protein bL34 family.

The protein is Large ribosomal subunit protein bL34 of Wolbachia pipientis wMel.